The sequence spans 226 residues: Enolase-phosphatase E1 (226 aa).

It belongs to the HAD-like hydrolase superfamily. MasA/MtnC family. In terms of assembly, monomer. The cofactor is Mg(2+).

The enzyme catalyses 5-methylsulfanyl-2,3-dioxopentyl phosphate + H2O = 1,2-dihydroxy-5-(methylsulfanyl)pent-1-en-3-one + phosphate. It participates in amino-acid biosynthesis; L-methionine biosynthesis via salvage pathway; L-methionine from S-methyl-5-thio-alpha-D-ribose 1-phosphate: step 3/6. Its pathway is amino-acid biosynthesis; L-methionine biosynthesis via salvage pathway; L-methionine from S-methyl-5-thio-alpha-D-ribose 1-phosphate: step 4/6. In terms of biological role, bifunctional enzyme that catalyzes the enolization of 2,3-diketo-5-methylthiopentyl-1-phosphate (DK-MTP-1-P) into the intermediate 2-hydroxy-3-keto-5-methylthiopentenyl-1-phosphate (HK-MTPenyl-1-P), which is then dephosphorylated to form the acireductone 1,2-dihydroxy-3-keto-5-methylthiopentene (DHK-MTPene). The chain is Enolase-phosphatase E1 from Alcanivorax borkumensis (strain ATCC 700651 / DSM 11573 / NCIMB 13689 / SK2).